A 998-amino-acid chain; its full sequence is Poly [ADP-ribose] polymerase 1 (998 aa).

2 PARP-type zinc fingers span residues 1 to 78 (AKSG…ETGG) and 99 to 189 (FAAE…PAVK). Cysteine 8, cysteine 11, histidine 40, cysteine 43, cysteine 111, cysteine 114, histidine 145, and cysteine 148 together coordinate Zn(2+). Residues 185–211 (LPAVKNEGKRKADEVDGHSAATKKKIK) form a disordered region. Basic and acidic residues predominate over residues 190–201 (NEGKRKADEVDG). 2 consecutive short sequence motifs (nuclear localization signal) follow at residues 193 to 195 (KRK) and 207 to 212 (KKKIKK). The 135-residue stretch at 211-345 (KKEKEKESKL…FKRHDRAFPP (135 aa)) folds into the PADR1 zinc-binding domain. The segment at 276–318 (GALLPCEECSGQFVFKGDAYYCTGDLSAWTKCVAKTQTPNRKD) is zinc ribbon. Zn(2+)-binding residues include cysteine 281, cysteine 284, cysteine 297, and cysteine 307. Residues 348–361 (APTPISPPAAPEPK) are compositionally biased toward pro residues. The interval 348-370 (APTPISPPAAPEPKPTVEETFPE) is disordered. The tract at residues 357–507 (APEPKPTVEE…GSNKSEKKMK (151 aa)) is automodification domain. One can recognise a BRCT domain in the interval 369-460 (PEGKPLTNTK…SVQELLSQFG (92 aa)). Residues glutamate 391, glutamate 397, glutamate 419, glutamate 428, glutamate 429, glutamate 445, glutamate 447, glutamate 454, glutamate 467, glutamate 471, glutamate 477, glutamate 495, glutamate 496, and glutamate 503 each carry the polyADP-ribosyl glutamic acid modification. The disordered stretch occupies residues 471 to 510 (EAVQPTEKQPSSGPVAGKSSGKVKEEKGSNKSEKKMKLTV). Residues 492 to 506 (KVKEEKGSNKSEKKM) are compositionally biased toward basic and acidic residues. The region spanning 525 to 621 (SCHVLETGGK…PNFTKYPKKF (97 aa)) is the WGR domain. Positions 645-762 (KSKLAKPVQE…DIEVAYSLLR (118 aa)) constitute a PARP alpha-helical domain. Residues 771-997 (DPIDVKYEKI…LKFNYKGGMM (227 aa)) form the PARP catalytic domain. Residues 845 to 847 (HGS), glycine 854, arginine 861, and serine 887 contribute to the NAD(+) site. Glutamate 971 serves as the catalytic For poly [ADP-ribose] polymerase activity.

The protein belongs to the ARTD/PARP family. As to quaternary structure, homodimer; PARP-type zinc-fingers from separate parp1 molecules form a dimer module that specifically recognizes DNA strand breaks. In terms of processing, poly-ADP-ribosylated on serine, glutamate and aspartate residues by autocatalysis. Auto-ADP-ribosylation on serine takes place following interaction with HPF1. Auto poly-ADP-ribosylation on serine residues promotes its dissociation from chromatin.

Its subcellular location is the chromosome. It localises to the nucleus. The protein localises to the nucleolus. It is found in the cytoplasm. The protein resides in the cytosol. The catalysed reaction is NAD(+) + (ADP-D-ribosyl)n-acceptor = nicotinamide + (ADP-D-ribosyl)n+1-acceptor + H(+).. It catalyses the reaction L-seryl-[protein] + NAD(+) = O-(ADP-D-ribosyl)-L-seryl-[protein] + nicotinamide + H(+). It carries out the reaction L-aspartyl-[protein] + NAD(+) = 4-O-(ADP-D-ribosyl)-L-aspartyl-[protein] + nicotinamide. The enzyme catalyses L-glutamyl-[protein] + NAD(+) = 5-O-(ADP-D-ribosyl)-L-glutamyl-[protein] + nicotinamide. The catalysed reaction is L-tyrosyl-[protein] + NAD(+) = O-(ADP-D-ribosyl)-L-tyrosyl-[protein] + nicotinamide + H(+). It catalyses the reaction L-histidyl-[protein] + NAD(+) = N(tele)-(ADP-D-ribosyl)-L-histidyl-[protein] + nicotinamide + H(+). ADP-ribosyltransferase activity is regulated via an allosteric activation mechanism. In absence of activation signal, parp1 is autoinhibited by the PARP alpha-helical domain (also named HD region), which prevents effective NAD(+)-binding. Activity is highly stimulated by signals, such as DNA strand breaks. Binding to damaged DNA unfolds the PARP alpha-helical domain, relieving autoinhibition. Poly-ADP-ribosyltransferase activity is tightly regulated and parp1 is removed from damaged chromatin following initial poly-ADP-ribosylation of chromatin to avoid prolonged residence (trapping) that has cytotoxic consequences. A number of factors or post-translational modifications (auto-poly-ADP-ribosylation) promote parp1 removal from chromatin. Its function is as follows. Poly-ADP-ribosyltransferase that mediates poly-ADP-ribosylation of proteins and plays a key role in DNA repair. Mediates glutamate, aspartate, serine, histidine or tyrosine ADP-ribosylation of proteins: the ADP-D-ribosyl group of NAD(+) is transferred to the acceptor carboxyl group of target residues and further ADP-ribosyl groups are transferred to the 2'-position of the terminal adenosine moiety, building up a polymer with an average chain length of 20-30 units. Serine ADP-ribosylation of proteins constitutes the primary form of ADP-ribosylation of proteins in response to DNA damage. Specificity for the different amino acids is conferred by interacting factors, such as hpf1 and nmnat1. Following interaction with hpf1, catalyzes serine ADP-ribosylation of target proteins; hpf1 confers serine specificity by completing the parp1 active site. Also catalyzes tyrosine ADP-ribosylation of target proteins following interaction with hpf1. Following interaction with nmnat1, catalyzes glutamate and aspartate ADP-ribosylation of target proteins; nmnat1 confers glutamate and aspartate specificity. Parp1 initiates the repair of DNA breaks: recognizes and binds DNA breaks within chromatin and recruits hpf1, licensing serine ADP-ribosylation of target proteins, such as histones (H2BS6ADPr and H3S10ADPr), thereby promoting decompaction of chromatin and the recruitment of repair factors leading to the reparation of DNA strand breaks. In addition to base excision repair (BER) pathway, also involved in double-strand breaks (DSBs) repair. Mediates the poly-ADP-ribosylation of a number of proteins. In addition to proteins, also able to ADP-ribosylate DNA: catalyzes ADP-ribosylation of DNA strand break termini containing terminal phosphates and a 2'-OH group in single- and double-stranded DNA, respectively. Parp1-mediated DNA repair in neurons plays a role in sleep: senses DNA damage in neurons and promotes sleep, facilitating efficient DNA repair. In addition to DNA repair, also involved in other processes, such as transcription regulation, programmed cell death, membrane repair, adipogenesis and innate immunity. Acts as a repressor of transcription: binds to nucleosomes and modulates chromatin structure in a manner similar to histone H1, thereby altering RNA polymerase II. Acts both as a positive and negative regulator of transcription elongation, depending on the context. Poly-ADP-ribose chains generated by parp1 also play a role in poly-ADP-ribose-dependent cell death, a process named parthanatos. Also acts as a negative regulator of the cGAS-STING pathway by mediating poly-ADP-ribosylation and inactivation of cgas. Acts as a negative regulator of adipogenesis by catalyzing poly ADP-ribosylation of histone H2B on 'Glu-35' (H2BE35ADPr). The chain is Poly [ADP-ribose] polymerase 1 (parp1) from Xenopus laevis (African clawed frog).